The chain runs to 325 residues: Transaldolase (325 aa).

Lysine 125 serves as the catalytic Schiff-base intermediate with substrate.

It belongs to the transaldolase family. Type 2 subfamily.

It localises to the cytoplasm. The enzyme catalyses D-sedoheptulose 7-phosphate + D-glyceraldehyde 3-phosphate = D-erythrose 4-phosphate + beta-D-fructose 6-phosphate. It participates in carbohydrate degradation; pentose phosphate pathway; D-glyceraldehyde 3-phosphate and beta-D-fructose 6-phosphate from D-ribose 5-phosphate and D-xylulose 5-phosphate (non-oxidative stage): step 2/3. Transaldolase is important for the balance of metabolites in the pentose-phosphate pathway. The chain is Transaldolase from Campylobacter jejuni subsp. doylei (strain ATCC BAA-1458 / RM4099 / 269.97).